We begin with the raw amino-acid sequence, 264 residues long: tRNA pseudouridine synthase A (264 aa).

The active-site Nucleophile is the aspartate 51. Tyrosine 109 contacts substrate.

Belongs to the tRNA pseudouridine synthase TruA family. In terms of assembly, homodimer.

The catalysed reaction is uridine(38/39/40) in tRNA = pseudouridine(38/39/40) in tRNA. Functionally, formation of pseudouridine at positions 38, 39 and 40 in the anticodon stem and loop of transfer RNAs. The protein is tRNA pseudouridine synthase A of Polaromonas naphthalenivorans (strain CJ2).